We begin with the raw amino-acid sequence, 228 residues long: Chromatin remodeling protein SHL (228 aa).

The BAH domain occupies 21–137 (KSIQEGDAVL…STTGAFDPDR (117 aa)). The PHD-type zinc finger occupies 139–190 (TVFCKCEMPYNPDDLMVQCEECSEWFHPSCIGTTIEEAKKPDNFYCEECSPQ). Residues 191 to 203 (QQNLHNSNSTSNN) are compositionally biased toward polar residues. The interval 191 to 228 (QQNLHNSNSTSNNRDAKVNGKRSLEVTKSKNKHTKRPG) is disordered. The segment covering 204–218 (RDAKVNGKRSLEVTK) has biased composition (basic and acidic residues). Residues 210–217 (GKRSLEVT) carry the Nuclear localization signal motif. A compositionally biased stretch (basic residues) spans 219–228 (SKNKHTKRPG).

Belongs to the SHL1/EBS protein family. Recognizes di- and trimethylated histone H3 at lysine 4. Interacts with HDA6. Interacts with DEK3. In terms of tissue distribution, expressed ubiquitously. Mostly expressed in roots, stems, leaves and flowers, and, to a lower extent, in siliques.

Its subcellular location is the nucleus. Its function is as follows. Chromatin remodeling factor that binds to methylated histone (e.g. H3K4me2/3) to prevent their acetylation (e.g. H3K9K14Ac), likely by recruiting histone deacetylase (HDAC) complexes, and thus regulate the transcription of target genes. Required during development and for fertility, probably by modulating developmental gene expression. Promotes development speed, but at fitness cost. Involved in the chromatin-mediated repression of floral initiation and controls genes regulating flowering. Negatively regulates the expression of the floral integrator SOC1, by preventing high levels of H3 acetylation, thus maintaining an inactive chromatin conformation. In Arabidopsis thaliana (Mouse-ear cress), this protein is Chromatin remodeling protein SHL.